The chain runs to 1282 residues: Clustered mitochondria protein homolog (1282 aa).

The segment at 1–43 (MEQNNGTTEHPKEVLDQTNPSNEVTGVPNGNHAEGEGDQNAGE) is disordered. Positions 341 to 585 (DITRPQENYL…RITPLDVLWY (245 aa)) constitute a Clu domain. Composition is skewed to basic and acidic residues over residues 631–641 (EAEEKAEESKP) and 653–669 (ESEK…RVDI). Disordered regions lie at residues 631–669 (EAEE…RVDI) and 892–936 (RSQL…PAPA). A compositionally biased stretch (low complexity) spans 924 to 936 (QASPRPAQSPAPA). A TPR repeat occupies 1003–1036 (AKLYHQLSMLYYQSDDKDAAVELARKAVIVTERT). A disordered region spans residues 1202-1282 (ANLPTRLGTK…SKQSTVKPSS (81 aa)). Residues 1212 to 1223 (PQPQVGQTTSEM) are compositionally biased toward polar residues. Residues 1257–1272 (TKQKKRAAARNPKLRG) are compositionally biased toward basic residues. The segment covering 1273–1282 (SKQSTVKPSS) has biased composition (polar residues).

This sequence belongs to the CLU family. In terms of assembly, may associate with the eukaryotic translation initiation factor 3 (eIF-3) complex.

The protein localises to the cytoplasm. In terms of biological role, mRNA-binding protein involved in proper cytoplasmic distribution of mitochondria. This is Clustered mitochondria protein homolog from Coccidioides immitis (strain RS) (Valley fever fungus).